The primary structure comprises 688 residues: PTS system glucoside-specific EIICBA component (688 aa).

The PTS EIIC type-1 domain occupies 3 to 427 (KKLFGQLQRI…FKLKTPGRED (425 aa)). The next 10 membrane-spanning stretches (helical) occupy residues 12-32 (IGKA…LLAF), 81-101 (LGLA…YLIM), 137-157 (LVLG…MGAL), 182-202 (FVPI…SFAW), 223-243 (LTTF…LHHI), 284-304 (AFTT…AFAI), 315-335 (VVGG…ITEP), 340-360 (FLFV…TSFL), 364-384 (LLGV…ILYG), and 395-415 (LVIP…DFAI). Residues 438–519 (AKLPFDVLDA…AKIMSGEITK (82 aa)) form the PTS EIIB type-1 domain. Cysteine 460 (phosphocysteine intermediate; for EIIB activity) is an active-site residue. The 105-residue stretch at 560-664 (DQVFAGKMMG…SIVTPMIITN (105 aa)) folds into the PTS EIIA type-1 domain. Residue histidine 612 is the Tele-phosphohistidine intermediate; for EIIA activity of the active site.

The protein resides in the cell membrane. In terms of biological role, the phosphoenolpyruvate-dependent sugar phosphotransferase system (sugar PTS), a major carbohydrate active -transport system, catalyzes the phosphorylation of incoming sugar substrates concomitantly with their translocation across the cell membrane. This system is involved in alpha- and beta-glucoside transport. The polypeptide is PTS system glucoside-specific EIICBA component (glcB) (Staphylococcus aureus (strain Mu3 / ATCC 700698)).